A 97-amino-acid chain; its full sequence is Co-chaperonin GroES (97 aa).

It belongs to the GroES chaperonin family. In terms of assembly, heptamer of 7 subunits arranged in a ring. Interacts with the chaperonin GroEL.

The protein resides in the cytoplasm. Functionally, together with the chaperonin GroEL, plays an essential role in assisting protein folding. The GroEL-GroES system forms a nano-cage that allows encapsulation of the non-native substrate proteins and provides a physical environment optimized to promote and accelerate protein folding. GroES binds to the apical surface of the GroEL ring, thereby capping the opening of the GroEL channel. The protein is Co-chaperonin GroES of Edwardsiella ictaluri (strain 93-146).